The following is an 860-amino-acid chain: Transcription factor E2F8 (860 aa).

The disordered stretch occupies residues 1 to 114 (MENQKENLFS…NEKSQPSRKE (114 aa)). The residue at position 71 (S71) is a Phosphoserine. 2 stretches are compositionally biased toward basic and acidic residues: residues 74–84 (IRSRDQKRGLS) and 92–114 (EARD…SRKE). 2 DNA-binding regions span residues 112 to 181 (RKEK…TWHG) and 261 to 347 (RKDK…KWTG). Disordered regions lie at residues 407-433 (RRKI…PPVP) and 533-616 (TPPH…PKED). Positions 411 to 426 (SSAPSSPVKSSKAESS) are enriched in low complexity. S412 and S416 each carry phosphoserine. The span at 542–554 (VCPTQSSNATGSK) shows a compositional bias: polar residues. 2 stretches are compositionally biased toward basic and acidic residues: residues 555 to 565 (DPTDAPTEKTA) and 586 to 596 (RSKETTGDRGT).

The protein belongs to the E2F/DP family. Homodimer and heterodimer: mainly forms homodimers and, to a lesser extent, heterodimers with E2F8. Dimerization is important for DNA-binding. Interacts with HIF1A.

It localises to the nucleus. Its function is as follows. Atypical E2F transcription factor that participates in various processes such as angiogenesis and polyploidization of specialized cells. Mainly acts as a transcription repressor that binds DNA independently of DP proteins and specifically recognizes the E2 recognition site 5'-TTTC[CG]CGC-3'. Directly represses transcription of classical E2F transcription factors such as E2F1: component of a feedback loop in S phase by repressing the expression of E2F1, thereby preventing p53/TP53-dependent apoptosis. Plays a key role in polyploidization of cells in placenta and liver by regulating the endocycle, probably by repressing genes promoting cytokinesis and antagonizing action of classical E2F proteins (E2F1, E2F2 and/or E2F3). Required for placental development by promoting polyploidization of trophoblast giant cells. Acts as a promoter of sprouting angiogenesis, possibly by acting as a transcription activator: associates with HIF1A, recognizes and binds the VEGFA promoter, which is different from canonical E2 recognition site, and activates expression of the VEGFA gene. The polypeptide is Transcription factor E2F8 (E2f8) (Rattus norvegicus (Rat)).